Reading from the N-terminus, the 2126-residue chain is Phthioceranic/hydroxyphthioceranic acid synthase (2126 aa).

In terms of domain architecture, Ketosynthase family 3 (KS3) spans 24–447 (VTPVAVIGMA…GTNVHAVVEQ (424 aa)). Cys196 serves as the catalytic Acyl-thioester intermediate; for beta-ketoacyl synthase activity. Active-site for beta-ketoacyl synthase activity residues include His331 and His367. Residues 449–549 (PQTEAQPHAA…VYQPAVGQDD (101 aa)) form a linker domain (LD) region. Positions 550–849 (RGPVWLFSGQ…VAALAGMRRE (300 aa)) are acyltransferase (AT). Residue Ser641 is the Acyl-ester intermediate; for acyltransferase activity of the active site. Residues 909-1191 (STVAVHPLLG…LAVCGLRIGT (283 aa)) are dehydratase (DH). Residues 914 to 1032 (HPLLGAHVRL…RRASAVLQQV (119 aa)) form an N-terminal hotdog fold region. One can recognise a PKS/mFAS DH domain in the interval 914–1198 (HPLLGAHVRL…IGTGVSERDK (285 aa)). His947 functions as the Proton acceptor; for dehydratase activity in the catalytic mechanism. The interval 1051–1198 (PCRVDGEDLR…IGTGVSERDK (148 aa)) is C-terminal hotdog fold. Catalysis depends on Asp1115, which acts as the Proton donor; for dehydratase activity. Residues 1227 to 1398 (KWLLISDCAA…SEEDETAWRD (172 aa)) form a pseudo beta-ketoacyl reductase (PsiKR) region. An enoylreductase (ER) region spans residues 1426 to 1750 (SGMRLQIRTP…EHTGKLVLHI (325 aa)). The interval 1772 to 2019 (GSYIITGGLG…AERSRFFEVF (248 aa)) is beta-ketoacyl reductase (KR). Residues 1780–1783 (LGGL), 1803–1806 (SRTQ), 1831–1832 (DI), and 1904–1905 (FS) contribute to the NADP(+) site. One can recognise a Carrier domain in the interval 2040 to 2126 (DEWPARLRQL…DAPAAALSSQ (87 aa)). Ser2075 carries the O-(pantetheine 4'-phosphoryl)serine modification.

It depends on pantetheine 4'-phosphate as a cofactor.

The enzyme catalyses hexadecanoyl-[(hydroxy)phthioceranic acid synthase] + 7 (S)-methylmalonyl-CoA + 14 NADPH + 21 H(+) = C37-phthioceranyl-[(hydroxy)phthioceranic acid synthase] + 7 CO2 + 14 NADP(+) + 7 CoA + 7 H2O. It catalyses the reaction hexadecanoyl-[(hydroxy)phthioceranic acid synthase] + 8 (S)-methylmalonyl-CoA + 16 NADPH + 24 H(+) = C40-phthioceranyl-[(hydroxy)phthioceranic acid synthase] + 8 CO2 + 16 NADP(+) + 8 CoA + 8 H2O. The polypeptide is Phthioceranic/hydroxyphthioceranic acid synthase (pks2) (Mycobacterium bovis (strain BCG / Pasteur 1173P2)).